The primary structure comprises 178 residues: Caveolin-1 (178 aa).

An N-acetylserine modification is found at Ser2. A Phosphoserine modification is found at Ser2. A required for homooligomerization region spans residues 2–94; the sequence is SGGKYVDSEG…WKASFTTFTV (93 aa). Topologically, residues 2 to 104 are cytoplasmic; sequence SGGKYVDSEG…TKYWFYRLLS (103 aa). Position 5 is an N6-acetyllysine; alternate (Lys5). A Glycyl lysine isopeptide (Lys-Gly) (interchain with G-Cter in ubiquitin); alternate cross-link involves residue Lys5. Tyr6 carries the post-translational modification Phosphotyrosine. Phosphoserine is present on Ser9. Position 14 is a phosphotyrosine; by ABL1 (Tyr14). Tyr25 carries the post-translational modification Phosphotyrosine. Residues Lys26, Lys30, Lys39, Lys47, and Lys57 each participate in a glycyl lysine isopeptide (Lys-Gly) (interchain with G-Cter in ubiquitin) cross-link. The segment at 82-94 is interaction with CAVIN3; sequence DGIWKASFTTFTV. Positions 105–125 form an intramembrane region, helical; sequence ALFGIPMALIWGIYFAILSFL. The Cytoplasmic portion of the chain corresponds to 126–178; that stretch reads HIWAVVPCIKSFLIEIQCISRVYSIYVHTFCDPLFEAIGKIFSNIRINTQKEI. An interacts with SPRY1, SPRY2, SPRY3 and SPRY4 region spans residues 131–142; sequence VPCIKSFLIEIQ. S-palmitoyl cysteine attachment occurs at residues Cys133, Cys143, and Cys156. Residues 149–160 are interacts with SPRY1, SPRY2, and SPRY4; that stretch reads SIYVHTFCDPLF. The interacts with SPRY1, SPRY2, SPRY3 and SPRY4 stretch occupies residues 167–178; that stretch reads FSNIRINTQKEI.

Belongs to the caveolin family. As to quaternary structure, homooligomer. Interacts with GLIPR2. Interacts with NOSTRIN. Interacts with SNAP25 and STX1A. Interacts (via the N-terminus) with DPP4; the interaction is direct. Interacts with CTNNB1, CDH1 and JUP. Interacts with PACSIN2; this interaction induces membrane tubulation. Interacts with SLC7A9. Interacts with BMX and BTK. Interacts with TGFBR1. Interacts with CAVIN3 (via leucine-zipper domain) in a cholesterol-sensitive manner. Interacts with CAVIN1. Interacts with EHD2 in a cholesterol-dependent manner. Forms a ternary complex with UBXN6 and VCP; mediates CAV1 targeting to lysosomes for degradation. Interacts with ABCG1; this interaction regulates ABCG1-mediated cholesterol efflux. Interacts with NEU3; this interaction enhances NEU3 sialidase activity within caveola. Interacts (via C-terminus) with SPRY1, SPRY2 (via C-terminus), SPRY3, and SPRY4. Interacts with IGFBP5; this interaction allows trafficking of IGFBP5 from the plasma membrane to the nucleus. Post-translationally, phosphorylated at Tyr-14 by ABL1 in response to oxidative stress. In terms of processing, ubiquitinated. Undergo monoubiquitination and multi- and/or polyubiquitination. Monoubiquitination of N-terminal lysines promotes integration in a ternary complex with UBXN6 and VCP which promotes oligomeric CAV1 targeting to lysosomes for degradation. Ubiquitinated by ZNRF1; leading to degradation and modulation of the TLR4-mediated immune response.

Its subcellular location is the golgi apparatus membrane. The protein resides in the cell membrane. It localises to the membrane. It is found in the caveola. The protein localises to the membrane raft. In terms of biological role, may act as a scaffolding protein within caveolar membranes. Forms a stable heterooligomeric complex with CAV2 that targets to lipid rafts and drives caveolae formation. Mediates the recruitment of CAVIN proteins (CAVIN1/2/3/4) to the caveolae. Interacts directly with G-protein alpha subunits and can functionally regulate their activity. Involved in the costimulatory signal essential for T-cell receptor (TCR)-mediated T-cell activation. Its binding to DPP4 induces T-cell proliferation and NF-kappa-B activation in a T-cell receptor/CD3-dependent manner. Recruits CTNNB1 to caveolar membranes and may regulate CTNNB1-mediated signaling through the Wnt pathway. Negatively regulates TGFB1-mediated activation of SMAD2/3 by mediating the internalization of TGFBR1 from membrane rafts leading to its subsequent degradation. Binds 20(S)-hydroxycholesterol (20(S)-OHC). This is Caveolin-1 (CAV1) from Bos taurus (Bovine).